The sequence spans 517 residues: Ribonuclease Y (517 aa).

Residues 1–21 (MIESLIALIAAIVGLGIGYLV) form a helical membrane-spanning segment. Residues 207-273 (LINVINIKND…TKVIELLVED (67 aa)) form the KH domain. The region spanning 333-426 (ALAHSLEVAH…VCAADTLSAA (94 aa)) is the HD domain.

This sequence belongs to the RNase Y family.

It is found in the cell membrane. In terms of biological role, endoribonuclease that initiates mRNA decay. This is Ribonuclease Y from Campylobacter jejuni subsp. jejuni serotype O:23/36 (strain 81-176).